An 878-amino-acid chain; its full sequence is Multiple C2 and transmembrane domain-containing protein 2 (878 aa).

Disordered stretches follow at residues 20–40 and 143–178; these read LINL…DLRV and KPSL…ESTL. Over residues 149 to 161 the composition is skewed to basic and acidic residues; the sequence is DAPEEHDKTHGND. 3 consecutive C2 domains span residues 177 to 292, 334 to 452, and 486 to 607; these read TLGE…EHIL, SKSS…CLEL, and PSER…CYVL. Ca(2+)-binding residues include Asp-210, Asp-216, Asp-263, Asp-265, and Asp-270. Asp-525, Asp-531, Asp-577, Asp-579, and Asp-585 together coordinate Ca(2+). Residues 694-714 traverse the membrane as a helical segment; it reads FVVFLVTVWNFELYMIPLALL. Residues 728-752 are disordered; it reads KASSTQDSQESTDVEEEGKEEEKES. Residues 737–746 show a composition bias toward acidic residues; it reads ESTDVEEEGK. Residues 794–814 traverse the membrane as a helical segment; that stretch reads PFLSLLACLILAITTVILYFI.

It belongs to the MCTP family. Ca(2+) is required as a cofactor.

The protein resides in the membrane. In terms of biological role, might play a role in the development of cardiac outflow tract. This chain is Multiple C2 and transmembrane domain-containing protein 2 (Mctp2), found in Mus musculus (Mouse).